The sequence spans 237 residues: Pyridoxal phosphate homeostasis protein (237 aa).

K35 is subject to N6-(pyridoxal phosphate)lysine.

It belongs to the pyridoxal phosphate-binding protein YggS/PROSC family.

In terms of biological role, pyridoxal 5'-phosphate (PLP)-binding protein, which is involved in PLP homeostasis. This Haemophilus influenzae (strain ATCC 51907 / DSM 11121 / KW20 / Rd) protein is Pyridoxal phosphate homeostasis protein.